Here is a 633-residue protein sequence, read N- to C-terminus: GTPase-activating protein GYP3 (633 aa).

Residues 26–127 form a disordered region; it reads AFTVKSPSVP…HSDDLDLVPD (102 aa). Basic and acidic residues predominate over residues 37–47; the sequence is FHDKMHSDHSS. Positions 99–115 are enriched in acidic residues; the sequence is GEDDDDNNGDNGNEDLE. Residue Ser-147 is modified to Phosphoserine. In terms of domain architecture, Rab-GAP TBC spans 223 to 456; sequence GIPAEWRGNA…RIWDCLFYEE (234 aa). Ser-484 carries the phosphoserine modification.

The protein localises to the cytoplasm. Its subcellular location is the bud. The protein resides in the bud neck. Regulates exocytosis by functioning as a GAP for SEC4. Stimulates specifically the GTPase activity of YPT6. Also required for efficient polarization of the actin patches. The protein is GTPase-activating protein GYP3 (MSB3) of Saccharomyces cerevisiae (strain ATCC 204508 / S288c) (Baker's yeast).